Consider the following 208-residue polypeptide: Fibroblast growth factor 6 (208 aa).

The N-terminal stretch at 1 to 37 is a signal peptide; that stretch reads MALGQRLFITMSRGAGRVQGTLQALVFLGVLVGMVVP. Asparagine 45 carries N-linked (GlcNAc...) asparagine glycosylation. A disulfide bridge links cysteine 90 with cysteine 157.

Belongs to the heparin-binding growth factors family. As to quaternary structure, interacts with FGFR1, FGFR2 and FGFR4. Affinity between fibroblast growth factors (FGFs) and their receptors is increased by heparan sulfate glycosaminoglycans that function as coreceptors. Embryos, adult muscles and adult testis.

It is found in the secreted. It localises to the extracellular space. In terms of biological role, plays an important role in the regulation of cell proliferation, cell differentiation, angiogenesis and myogenesis, and is required for normal muscle regeneration. The protein is Fibroblast growth factor 6 (Fgf6) of Mus musculus (Mouse).